We begin with the raw amino-acid sequence, 463 residues long: MLAFLNQVRKPTLDLPLEVRRKMWFKPFMQSYLVVFIGYLTMYLIRKNFNIAQNDMISTYGLSMTQLGMIGLGFSITYGVGKTLVSYYADGKNTKQFLPFMLILSAICMLGFSASMGSGSVSLFLMIAFYALSGFFQSTGGSCSYSTITKWTPRRKRGTFLGFWNISHNLGGAGAAGVALFGANYLFDGHVIGMFIFPSIIALIVGFIGLRYGSDSPESYGLGKAEELFGEEISEEDKETESTDMTKWQIFVEYVLKNKVIWLLCFANIFLYVVRIGIDQWSTVYAFQELKLSKAVAIQGFTLFEAGALVGTLLWGWLSDLANGRRGLVACIALALIIATLGVYQHASNEYIYLASLFALGFLVFGPQLLIGVAAVGFVPKKAIGAADGIKGTFAYLIGDSFAKLGLGMIADGTPVFGLTGWAGTFAALDIAAIGCICLMAIVAVMEERKIRREKKIQQLTVA.

Over 1 to 24 the chain is Cytoplasmic; it reads MLAFLNQVRKPTLDLPLEVRRKMW. Residues 25–45 form a helical membrane-spanning segment; that stretch reads FKPFMQSYLVVFIGYLTMYLI. The Periplasmic segment spans residues 46–60; sequence RKNFNIAQNDMISTY. The helical transmembrane segment at 61–81 threads the bilayer; sequence GLSMTQLGMIGLGFSITYGVG. Over 82-96 the chain is Cytoplasmic; that stretch reads KTLVSYYADGKNTKQ. Residues 97–117 form a helical membrane-spanning segment; sequence FLPFMLILSAICMLGFSASMG. Over 118–120 the chain is Periplasmic; it reads SGS. Residues 121 to 141 form a helical membrane-spanning segment; sequence VSLFLMIAFYALSGFFQSTGG. Topologically, residues 142 to 159 are cytoplasmic; sequence SCSYSTITKWTPRRKRGT. Residues 160–180 traverse the membrane as a helical segment; the sequence is FLGFWNISHNLGGAGAAGVAL. At 181–189 the chain is on the periplasmic side; sequence FGANYLFDG. Residues 190–210 traverse the membrane as a helical segment; it reads HVIGMFIFPSIIALIVGFIGL. The Cytoplasmic portion of the chain corresponds to 211-259; the sequence is RYGSDSPESYGLGKAEELFGEEISEEDKETESTDMTKWQIFVEYVLKNK. The helical transmembrane segment at 260 to 280 threads the bilayer; sequence VIWLLCFANIFLYVVRIGIDQ. Over 281-297 the chain is Periplasmic; it reads WSTVYAFQELKLSKAVA. A helical transmembrane segment spans residues 298-318; sequence IQGFTLFEAGALVGTLLWGWL. The Cytoplasmic portion of the chain corresponds to 319–326; sequence SDLANGRR. The helical transmembrane segment at 327 to 347 threads the bilayer; sequence GLVACIALALIIATLGVYQHA. Topologically, residues 348 to 357 are periplasmic; that stretch reads SNEYIYLASL. Residues 358–378 form a helical membrane-spanning segment; it reads FALGFLVFGPQLLIGVAAVGF. Residues 379-382 are Cytoplasmic-facing; that stretch reads VPKK. A helical transmembrane segment spans residues 383–403; sequence AIGAADGIKGTFAYLIGDSFA. At 404–425 the chain is on the periplasmic side; the sequence is KLGLGMIADGTPVFGLTGWAGT. Residues 426 to 446 traverse the membrane as a helical segment; the sequence is FAALDIAAIGCICLMAIVAVM. Residues 447 to 463 are Cytoplasmic-facing; it reads EERKIRREKKIQQLTVA.

The protein belongs to the major facilitator superfamily. Organophosphate:Pi antiporter (OPA) (TC 2.A.1.4) family.

It is found in the cell inner membrane. In terms of biological role, mediates the exchange of external hexose 6-phosphate and internal inorganic phosphate. This Escherichia coli O157:H7 protein is Hexose-6-phosphate:phosphate antiporter (uhpT).